We begin with the raw amino-acid sequence, 198 residues long: Ribonuclease 3-like protein 1 (198 aa).

The span at 85–110 (KKLAPKPDEEHTTTTKPISKDDESKT) shows a compositional bias: basic and acidic residues. Positions 85–115 (KKLAPKPDEEHTTTTKPISKDDESKTRRGSA) are disordered. In terms of domain architecture, DRBM spans 114-191 (SAKSVLHEMC…AEGALWYLEH (78 aa)).

The protein is Ribonuclease 3-like protein 1 (RTL1) of Arabidopsis thaliana (Mouse-ear cress).